Here is a 184-residue protein sequence, read N- to C-terminus: ATP-dependent protease subunit HslV (184 aa).

The active site involves Thr-8. 3 residues coordinate Na(+): Gly-165, Asp-168, and Thr-171.

It belongs to the peptidase T1B family. HslV subfamily. A double ring-shaped homohexamer of HslV is capped on each side by a ring-shaped HslU homohexamer. The assembly of the HslU/HslV complex is dependent on binding of ATP.

The protein resides in the cytoplasm. It catalyses the reaction ATP-dependent cleavage of peptide bonds with broad specificity.. Its activity is regulated as follows. Allosterically activated by HslU binding. Functionally, protease subunit of a proteasome-like degradation complex believed to be a general protein degrading machinery. This chain is ATP-dependent protease subunit HslV, found in Pediococcus pentosaceus (strain ATCC 25745 / CCUG 21536 / LMG 10740 / 183-1w).